The following is a 308-amino-acid chain: Ribosomal RNA small subunit methyltransferase H (308 aa).

Residues glycine 36–histidine 38, aspartate 55, phenylalanine 82, aspartate 103, and glutamine 110 each bind S-adenosyl-L-methionine.

This sequence belongs to the methyltransferase superfamily. RsmH family.

Its subcellular location is the cytoplasm. It catalyses the reaction cytidine(1402) in 16S rRNA + S-adenosyl-L-methionine = N(4)-methylcytidine(1402) in 16S rRNA + S-adenosyl-L-homocysteine + H(+). Functionally, specifically methylates the N4 position of cytidine in position 1402 (C1402) of 16S rRNA. This chain is Ribosomal RNA small subunit methyltransferase H, found in Helicobacter pylori (strain J99 / ATCC 700824) (Campylobacter pylori J99).